A 353-amino-acid polypeptide reads, in one-letter code: B1 bradykinin receptor (353 aa).

Residues 1–41 are Extracellular-facing; sequence MASQTLVVFQASNQSQLPPPNATLCDGAQEAWHLLHKVLPT. N-linked (GlcNAc...) asparagine glycosylation is found at N13 and N21. A helical transmembrane segment spans residues 42–62; it reads CVVAICSGGLLGNLFVLSVFL. Residues 63 to 72 are Cytoplasmic-facing; the sequence is VPRRRLNAAE. The helical transmembrane segment at 73 to 93 threads the bilayer; the sequence is IYLAHLAASDLVFALGLPFWA. Residues 94 to 110 are Extracellular-facing; sequence ETIRNGFHWPFGAPLCR. Residues C109 and C189 are joined by a disulfide bond. Residues 111–131 traverse the membrane as a helical segment; it reads VVNGVIKANLFISIFLVVAIS. The Cytoplasmic segment spans residues 132–154; sequence RDRYRALVHPVASWRRRRRRHWA. Residues 155–175 traverse the membrane as a helical segment; it reads QATCVLIWTAGGLLSIPTFLL. Over 176-207 the chain is Extracellular; sequence RSVQVVPELNVSACVLPFPHEAWAFVRTVELN. N185 is a glycosylation site (N-linked (GlcNAc...) asparagine). Residues 208–228 form a helical membrane-spanning segment; it reads VLGFLLPLAAILFFNYHILAA. The Cytoplasmic segment spans residues 229-251; sequence LRGREQLSRTRCGGPRDGKTTAL. A helical transmembrane segment spans residues 252-272; the sequence is ILTLVAVFLLCWTPYHVCAFL. Over 273 to 295 the chain is Extracellular; that stretch reads EFLLHVRAIRGCFWEDFTDLGLQ. The helical transmembrane segment at 296–316 threads the bilayer; the sequence is YTNFFAFINSCLNPVIYVFWG. The Cytoplasmic portion of the chain corresponds to 317–353; it reads QLFRTKIWELYHRCLPRKLTAVSSSRRKEIFQIFWRN. C330 carries S-palmitoyl cysteine lipidation.

The protein belongs to the G-protein coupled receptor 1 family. Bradykinin receptor subfamily. BDKRB1 sub-subfamily.

It is found in the cell membrane. Functionally, this is a receptor for bradykinin. Could be a factor in chronic pain and inflammation. This chain is B1 bradykinin receptor (BDKRB1), found in Sus scrofa (Pig).